Reading from the N-terminus, the 173-residue chain is Cytochrome c homolog (173 aa).

Residues 1–8 (MSGKELNK) are Cytoplasmic-facing. The chain crosses the membrane as a helical; Signal-anchor span at residues 9–29 (IVAAILFASLIAMMVGFIANI). The Periplasmic segment spans residues 30–173 (LYKPVLEPKH…LFLKTYVHDK (144 aa)). The heme c site is built by Cys-82, Cys-85, His-86, and Met-148.

This sequence belongs to the cytochrome c family. In terms of processing, binds 1 heme c group covalently per subunit.

It localises to the cell membrane. Its function is as follows. May be involved in electron transfer from bc1 complex to aa3. In Rickettsia bellii (strain RML369-C), this protein is Cytochrome c homolog (cycM).